We begin with the raw amino-acid sequence, 457 residues long: Siroheme synthase (457 aa).

The segment at 1-204 (MDHLPIFCQL…ADAKAVSEIT (204 aa)) is precorrin-2 dehydrogenase /sirohydrochlorin ferrochelatase. NAD(+) contacts are provided by residues 22–23 (DV) and 43–44 (LA). The residue at position 128 (Ser128) is a Phosphoserine. The segment at 216 to 457 (GEVVLVGAGP…RDKLNWFSNH (242 aa)) is uroporphyrinogen-III C-methyltransferase. S-adenosyl-L-methionine is bound at residue Pro225. The Proton acceptor role is filled by Asp248. Lys270 (proton donor) is an active-site residue. Residues 301–303 (GGD), Ile306, 331–332 (TA), Met382, and Gly411 contribute to the S-adenosyl-L-methionine site.

In the N-terminal section; belongs to the precorrin-2 dehydrogenase / sirohydrochlorin ferrochelatase family. It in the C-terminal section; belongs to the precorrin methyltransferase family.

The catalysed reaction is uroporphyrinogen III + 2 S-adenosyl-L-methionine = precorrin-2 + 2 S-adenosyl-L-homocysteine + H(+). The enzyme catalyses precorrin-2 + NAD(+) = sirohydrochlorin + NADH + 2 H(+). It catalyses the reaction siroheme + 2 H(+) = sirohydrochlorin + Fe(2+). It functions in the pathway cofactor biosynthesis; adenosylcobalamin biosynthesis; precorrin-2 from uroporphyrinogen III: step 1/1. The protein operates within cofactor biosynthesis; adenosylcobalamin biosynthesis; sirohydrochlorin from precorrin-2: step 1/1. It participates in porphyrin-containing compound metabolism; siroheme biosynthesis; precorrin-2 from uroporphyrinogen III: step 1/1. Its pathway is porphyrin-containing compound metabolism; siroheme biosynthesis; siroheme from sirohydrochlorin: step 1/1. It functions in the pathway porphyrin-containing compound metabolism; siroheme biosynthesis; sirohydrochlorin from precorrin-2: step 1/1. Its function is as follows. Multifunctional enzyme that catalyzes the SAM-dependent methylations of uroporphyrinogen III at position C-2 and C-7 to form precorrin-2 via precorrin-1. Then it catalyzes the NAD-dependent ring dehydrogenation of precorrin-2 to yield sirohydrochlorin. Finally, it catalyzes the ferrochelation of sirohydrochlorin to yield siroheme. This chain is Siroheme synthase, found in Citrobacter koseri (strain ATCC BAA-895 / CDC 4225-83 / SGSC4696).